The sequence spans 498 residues: Cytochrome P450 6B1 (498 aa).

Cys443 is a binding site for heme.

It belongs to the cytochrome P450 family. The cofactor is heme. In terms of tissue distribution, midgut microsome.

The protein localises to the endoplasmic reticulum membrane. Its subcellular location is the microsome membrane. It carries out the reaction an organic molecule + reduced [NADPH--hemoprotein reductase] + O2 = an alcohol + oxidized [NADPH--hemoprotein reductase] + H2O + H(+). Functionally, enables the insect to feed on furanocoumarin-producing plants and evolved as an adaptation for detoxification of xanthotoxin and other furanocoumarins. The chain is Cytochrome P450 6B1 (CYP6B1) from Papilio polyxenes (Black swallowtail butterfly).